The primary structure comprises 961 residues: Glycine dehydrogenase (decarboxylating) (961 aa).

Position 709 is an N6-(pyridoxal phosphate)lysine (lysine 709).

The protein belongs to the GcvP family. In terms of assembly, the glycine cleavage system is composed of four proteins: P, T, L and H. Pyridoxal 5'-phosphate is required as a cofactor.

The catalysed reaction is N(6)-[(R)-lipoyl]-L-lysyl-[glycine-cleavage complex H protein] + glycine + H(+) = N(6)-[(R)-S(8)-aminomethyldihydrolipoyl]-L-lysyl-[glycine-cleavage complex H protein] + CO2. In terms of biological role, the glycine cleavage system catalyzes the degradation of glycine. The P protein binds the alpha-amino group of glycine through its pyridoxal phosphate cofactor; CO(2) is released and the remaining methylamine moiety is then transferred to the lipoamide cofactor of the H protein. The protein is Glycine dehydrogenase (decarboxylating) of Streptomyces griseus subsp. griseus (strain JCM 4626 / CBS 651.72 / NBRC 13350 / KCC S-0626 / ISP 5235).